The chain runs to 426 residues: MAIAHLATEYVFSDFLLKEPTEPKFKGLRLELAVDKMVTCIAVGLPLLLISLAFAQEISIGTQISCFSPSSFSWRQAAFVDSYCWAAVQQKSSLQSESGNLPLWLHKFFPYILLLFAILLYLPALFWRFSAAPHLCSDLKFIMEELDKVYNRAIKAAKSARDLDLRDGPGPPGVTENVGQSLWEISESHFKYPIVEQYLKTKKNSSHLIMKYISCRLVTFVVILLACIYLSYYFSLSSLSDEFLCSIKSGVLKNDSTIPDRFQCKLIAVGIFQLLSLINLIVYALLIPVVVYTFFIPFRQKTDILKVYEILPTFDVLHFKSEGYNDLSLYNLFLEENISELKSYKCLKVLENIKSNGQGIDPMLLLTNLGMIKMDIIDGKIPTSLQTKGEDQGSQRVEFKDLDLSSEAAANNGEKNSRQRLLNPSC.

The Cytoplasmic segment spans residues Met1 to Cys40. An S-nitrosocysteine modification is found at Cys40. A helical membrane pass occupies residues Ile41–Gly61. Topologically, residues Thr62 to His106 are extracellular. Intrachain disulfides connect Cys66/Cys264 and Cys84/Cys245. A helical transmembrane segment spans residues Lys107–Trp127. The Cytoplasmic segment spans residues Arg128–Arg216. Residue Tyr198 is modified to Phosphotyrosine. A helical membrane pass occupies residues Leu217 to Ser237. Over Ser238 to Leu277 the chain is Extracellular. N-linked (GlcNAc...) asparagine glycosylation occurs at Asn254. A helical membrane pass occupies residues Ile278–Phe298. Over Arg299–Cys426 the chain is Cytoplasmic. Position 346 is an S-nitrosocysteine (Cys346).

It belongs to the pannexin family. As to quaternary structure, homoheptameric. S-nitrosylation inhibits channel currents and ATP release. Post-translationally, N-glycosylation may play a role in cell surface targeting. Exists in three glycosylation states: non-glycosylated (GLY0), high-mannose glycosylated (GLY1), and fully mature glycosylated (GLY2). In terms of processing, phosphorylated at Tyr-198 by SRC. Phosphorylation activates ATP release. Constitutively phosphorylated in vascular smooth muscle cells. Cleaved by CASP3 and CASP7 during apoptosis. Cleavage opens the channel for the release of metabolites and induces plasma membrane permeability during apoptosis. As to expression, widely expressed, including in cartilage, skin, spleen and brain.

The protein resides in the cell membrane. It is found in the endoplasmic reticulum membrane. The enzyme catalyses chloride(in) = chloride(out). It carries out the reaction iodide(out) = iodide(in). It catalyses the reaction Ca(2+)(in) = Ca(2+)(out). The catalysed reaction is ATP(in) = ATP(out). The enzyme catalyses K(+)(in) = K(+)(out). It carries out the reaction Na(+)(in) = Na(+)(out). It catalyses the reaction nitrate(in) = nitrate(out). The catalysed reaction is L-aspartate(out) = L-aspartate(in). The enzyme catalyses L-glutamate(out) = L-glutamate(in). It carries out the reaction D-gluconate(in) = D-gluconate(out). It catalyses the reaction spermidine(in) = spermidine(out). Functionally, ion channel involved in a variety of physiological functions such as blood pressure regulation, apoptotic cell clearance and oogenesis. Forms anion-selective channels with relatively low conductance and an order of permeabilities: nitrate&gt;iodide&gt;chlroride&gt;&gt;aspartate=glutamate=gluconate. Can release ATP upon activation through phosphorylation or cleavage at C-terminus. May play a role as a Ca(2+)-leak channel to regulate ER Ca(2+) homeostasis. In terms of biological role, during apoptosis and after cleavage by caspases of the C-terminal tail, acts as a plasma membrane channel which mediates the regulated release of find-me signals, such as nucleotides ATP and UTP, and selective plasme membrane permeability. In Mus musculus (Mouse), this protein is Pannexin-1.